Consider the following 248-residue polypeptide: Coenzyme F420:L-glutamate ligase (248 aa).

GTP-binding positions include 15–18, 45–46, and K50; these read IPLI and ET. D115 serves as a coordination point for a divalent metal cation. N118 serves as a coordination point for GTP. The a divalent metal cation site is built by D155, S156, and Q213. A GTP-binding site is contributed by 211-218; sequence MGQSDEGI.

Belongs to the CofE family. As to quaternary structure, homodimer. The cofactor is Mg(2+). Mn(2+) is required as a cofactor. It depends on K(+) as a cofactor.

The enzyme catalyses oxidized coenzyme F420-0 + GTP + L-glutamate = oxidized coenzyme F420-1 + GDP + phosphate + H(+). It catalyses the reaction oxidized coenzyme F420-1 + GTP + L-glutamate = oxidized coenzyme F420-2 + GDP + phosphate + H(+). Its pathway is cofactor biosynthesis; coenzyme F420 biosynthesis. Its function is as follows. Catalyzes the GTP-dependent successive addition of two or more gamma-linked L-glutamates to the L-lactyl phosphodiester of 7,8-didemethyl-8-hydroxy-5-deazariboflavin (F420-0) to form coenzyme F420-0-glutamyl-glutamate (F420-2) or polyglutamated F420 derivatives. This Methanococcus maripaludis (strain C6 / ATCC BAA-1332) protein is Coenzyme F420:L-glutamate ligase.